The following is a 513-amino-acid chain: Activin receptor type-2A (513 aa).

The first 19 residues, 1 to 19, serve as a signal peptide directing secretion; it reads MGAAAKLAFAVFLISCSSG. Over 20–135 the chain is Extracellular; sequence AILGRSETQE…TSNPVTPKPP (116 aa). Intrachain disulfides connect Cys-30/Cys-60, Cys-50/Cys-78, Cys-85/Cys-104, Cys-91/Cys-103, and Cys-105/Cys-110. N-linked (GlcNAc...) asparagine glycosylation is found at Asn-43 and Asn-66. Residues 136 to 161 traverse the membrane as a helical segment; that stretch reads YYNILLYSLVPLMLIAGIVICAFWVY. Residues 162-513 lie on the Cytoplasmic side of the membrane; it reads RHHMMAYPPV…VDFPPKESSL (352 aa). The Protein kinase domain maps to 192–485; it reads LQLLEVKARG…GERITQMQRL (294 aa). Residues 198–206 and Lys-219 contribute to the ATP site; that span reads KARGRFGCV. Asp-322 functions as the Proton acceptor in the catalytic mechanism.

The protein belongs to the protein kinase superfamily. TKL Ser/Thr protein kinase family. TGFB receptor subfamily. Part of a complex consisting of MAGI2/ARIP1, ACVR2A, ACVR1B and SMAD3. Interacts with MAGI2/ARIP1. Interacts with type I receptor ACVR1. Interacts with BMP7. Interacts with TSC22D1/TSC-22. Interacts with activin A/INHBA. Requires Mg(2+) as cofactor. Mn(2+) serves as cofactor.

It localises to the cell membrane. The enzyme catalyses L-threonyl-[receptor-protein] + ATP = O-phospho-L-threonyl-[receptor-protein] + ADP + H(+). It catalyses the reaction L-seryl-[receptor-protein] + ATP = O-phospho-L-seryl-[receptor-protein] + ADP + H(+). In terms of biological role, on ligand binding, forms a receptor complex consisting of two type II and two type I transmembrane serine/threonine kinases. Type II receptors phosphorylate and activate type I receptors which autophosphorylate, then bind and activate SMAD transcriptional regulators. Receptor for activin A, activin B and inhibin A. Mediates induction of adipogenesis by GDF6. This chain is Activin receptor type-2A, found in Rattus norvegicus (Rat).